A 154-amino-acid polypeptide reads, in one-letter code: Toxin YhaV (154 aa).

Homohexamer; forms a complex with PrlF (SohA) with stoichiometry PrlF(2)-YhaV(4), possibly as a YhaV(2)-PrlF(2)-YhaV(2) complex like the MazFE complex. May dimerize in solution.

Functionally, toxic component of a type II toxin-antitoxin (TA) system. Has RNase activity in vitro. Acts as a transcription factor. The YhaV/PrlF complex binds the prlF-yhaV operon, probably negatively regulating its expression. The polypeptide is Toxin YhaV (yhaV) (Escherichia coli O157:H7).